Reading from the N-terminus, the 84-residue chain is Large ribosomal subunit protein bL27 (84 aa).

The segment at 1-24 is disordered; the sequence is MAHKKGGGSSKNGRDSNSQRLGVK.

It belongs to the bacterial ribosomal protein bL27 family.

The sequence is that of Large ribosomal subunit protein bL27 from Leptospira borgpetersenii serovar Hardjo-bovis (strain JB197).